A 174-amino-acid chain; its full sequence is Ribosome maturation factor RimM (174 aa).

The PRC barrel domain occupies 97 to 169; the sequence is GNKFYFHEVI…KVVMDLPEGL (73 aa).

This sequence belongs to the RimM family. As to quaternary structure, binds ribosomal protein uS19.

The protein localises to the cytoplasm. Functionally, an accessory protein needed during the final step in the assembly of 30S ribosomal subunit, possibly for assembly of the head region. Essential for efficient processing of 16S rRNA. May be needed both before and after RbfA during the maturation of 16S rRNA. It has affinity for free ribosomal 30S subunits but not for 70S ribosomes. The protein is Ribosome maturation factor RimM of Flavobacterium psychrophilum (strain ATCC 49511 / DSM 21280 / CIP 103535 / JIP02/86).